The chain runs to 627 residues: Chaperone protein DnaK (627 aa).

Thr-197 bears the Phosphothreonine; by autocatalysis mark. Residues 602–611 show a composition bias toward polar residues; sequence ENQHSEANTV. Residues 602 to 627 form a disordered region; the sequence is ENQHSEANTVNDEKVVDADFQDVDKK. Over residues 612–627 the composition is skewed to basic and acidic residues; that stretch reads NDEKVVDADFQDVDKK.

This sequence belongs to the heat shock protein 70 family.

In terms of biological role, acts as a chaperone. The protein is Chaperone protein DnaK of Rickettsia felis (strain ATCC VR-1525 / URRWXCal2) (Rickettsia azadi).